A 325-amino-acid polypeptide reads, in one-letter code: SPbeta prophage-derived uncharacterized protein YopR (325 aa).

In Bacillus subtilis (strain 168), this protein is SPbeta prophage-derived uncharacterized protein YopR (yopR).